We begin with the raw amino-acid sequence, 668 residues long: UvrABC system protein B (668 aa).

Residues Q31–R416 enclose the Helicase ATP-binding domain. An ATP-binding site is contributed by G44–T51. The Beta-hairpin motif lies at Y97–I120. The 164-residue stretch at Q433 to I596 folds into the Helicase C-terminal domain. The UVR domain occupies E621–Q656.

Belongs to the UvrB family. Forms a heterotetramer with UvrA during the search for lesions. Interacts with UvrC in an incision complex.

Its subcellular location is the cytoplasm. The UvrABC repair system catalyzes the recognition and processing of DNA lesions. A damage recognition complex composed of 2 UvrA and 2 UvrB subunits scans DNA for abnormalities. Upon binding of the UvrA(2)B(2) complex to a putative damaged site, the DNA wraps around one UvrB monomer. DNA wrap is dependent on ATP binding by UvrB and probably causes local melting of the DNA helix, facilitating insertion of UvrB beta-hairpin between the DNA strands. Then UvrB probes one DNA strand for the presence of a lesion. If a lesion is found the UvrA subunits dissociate and the UvrB-DNA preincision complex is formed. This complex is subsequently bound by UvrC and the second UvrB is released. If no lesion is found, the DNA wraps around the other UvrB subunit that will check the other stand for damage. The protein is UvrABC system protein B of Chlamydia trachomatis serovar A (strain ATCC VR-571B / DSM 19440 / HAR-13).